A 190-amino-acid polypeptide reads, in one-letter code: MLDTLQKSLEISPVIKKNNYYYFINPITDGIPSVEPELLQEIANHIVENTKMNVDKIVSIEAMGIPIATSLSLKSGVPLSIIRKRKYGLNGEIAVSQSTGYSKGQLYINGIESGDRILIVDDVVSTGGTLQSVIKALIDAGSIIDEVVVIVERGEGVSKLKEMNIPVKSLIKINVDEKGVSIREVNGGKQ.

It belongs to the purine/pyrimidine phosphoribosyltransferase family. Archaeal HPRT subfamily. Homodimer.

It localises to the cytoplasm. It carries out the reaction IMP + diphosphate = hypoxanthine + 5-phospho-alpha-D-ribose 1-diphosphate. It catalyses the reaction GMP + diphosphate = guanine + 5-phospho-alpha-D-ribose 1-diphosphate. The protein operates within purine metabolism; IMP biosynthesis via salvage pathway; IMP from hypoxanthine: step 1/1. Catalyzes a salvage reaction resulting in the formation of IMP that is energically less costly than de novo synthesis. The polypeptide is Hypoxanthine/guanine phosphoribosyltransferase (Methanohalobium evestigatum (strain ATCC BAA-1072 / DSM 3721 / NBRC 107634 / OCM 161 / Z-7303)).